We begin with the raw amino-acid sequence, 226 residues long: DNA mismatch repair protein MutH (226 aa).

It belongs to the MutH family.

It localises to the cytoplasm. Functionally, sequence-specific endonuclease that cleaves unmethylated GATC sequences. It is involved in DNA mismatch repair. In Vibrio parahaemolyticus serotype O3:K6 (strain RIMD 2210633), this protein is DNA mismatch repair protein MutH.